Consider the following 189-residue polypeptide: UPF0398 protein LCK_00599 (189 aa).

The protein belongs to the UPF0398 family.

The polypeptide is UPF0398 protein LCK_00599 (Leuconostoc citreum (strain KM20)).